The chain runs to 1147 residues: MDEPPFSEAALEQALGEPCDLDAALLTDIEDMLQLINNQDSDFPGLFDPPYAGSGAGGTDPASPDTSSPGSLSPPPATLSSSLEAFLSGPQAAPSPLSPPQPAPTPLKMYPSMPAFSPGPGIKEESVPLSILQTPTPQPLPGALLPQSFPAPAPPQFSSTPVLGYPSPPGGFSTGSPPGNTQQPLPGLPLASPPGVPPVSLHTQVQSVVPQQLLTVTAAPTAAPVTTTVTSQIQQVPVLLQPHFIKADSLLLTAMKTDGATVKAAGLSPLVSGTTVQTGPLPTLVSGGTILATVPLVVDAEKLPINRLAAGSKAPASAQSRGEKRTAHNAIEKRYRSSINDKIIELKDLVVGTEAKLNKSAVLRKAIDYIRFLQHSNQKLKQENLSLRTAVHKSKSLKDLVSACGSGGNTDVLMEGVKTEVEDTLTPPPSDAGSPFQSSPLSLGSRGSGSGGSGSDSEPDSPVFEDSKAKPEQRPSLHSRGMLDRSRLALCTLVFLCLSCNPLASLLGARGLPSPSDTTSVYHSPGRNVLGTESRDGPGWAQWLLPPVVWLLNGLLVLVSLVLLFVYGEPVTRPHSGPAVYFWRHRKQADLDLARGDFAQAAQQLWLALRALGRPLPTSHLDLACSLLWNLIRHLLQRLWVGRWLAGRAGGLQQDCALRVDASASARDAALVYHKLHQLHTMGKHTGGHLTATNLALSALNLAECAGDAVSVATLAEIYVAAALRVKTSLPRALHFLTRFFLSSARQACLAQSGSVPPAMQWLCHPVGHRFFVDGDWSVLSTPWESLYSLAGNPVDPLAQVTQLFREHLLERALNCVTQPNPSPGSADGDKEFSDALGYLQLLNSCSDAAGAPAYSFSISSSMATTTGVDPVAKWWASLTAVVIHWLRRDEEAAERLCPLVEHLPRVLQESERPLPRAALHSFKAARALLGCAKAESGPASLTICEKASGYLQDSLATTPASSSIDKAVQLFLCDLLLVVRTSLWRQQQPPAPAPAAQGTSSRPQASALELRGFQRDLSSLRRLAQSFRPAMRRVFLHEATARLMAGASPTRTHQLLDRSLRRRAGPGGKGGAVAELEPRPTRREHAEALLLASCYLPPGFLSAPGQRVGMLAEAARTLEKLGDRRLLHDCQQMLMRLGGGTTVTSS.

Positions 1–60 (MDEPPFSEAALEQALGEPCDLDAALLTDIEDMLQLINNQDSDFPGLFDPPYAGSGAGGTD) are transcriptional activation (acidic). Over 1 to 487 (MDEPPFSEAA…HSRGMLDRSR (487 aa)) the chain is Cytoplasmic. Positions 27-35 (TDIEDMLQL) match the 9aaTAD motif. Residues 39–193 (QDSDFPGLFD…PLPGLPLASP (155 aa)) form a disordered region. Low complexity-rich tracts occupy residues 62 to 71 (ASPDTSSPGS) and 78 to 95 (TLSS…AAPS). A compositionally biased stretch (pro residues) spans 96–105 (PLSPPQPAPT). 2 positions are modified to phosphoserine: Ser98 and Ser117. The segment covering 170–190 (GGFSTGSPPGNTQQPLPGLPL) has biased composition (low complexity). The segment at 234-497 (QQVPVLLQPH…LALCTLVFLC (264 aa)) is interaction with LMNA. In terms of domain architecture, bHLH spans 323-373 (EKRTAHNAIEKRYRSSINDKIIELKDLVVGTEAKLNKSAVLRKAIDYIRFL). 2 positions are modified to phosphoserine; by SIK1: Ser337 and Ser338. Residues 373–394 (LQHSNQKLKQENLSLRTAVHKS) are leucine-zipper. At Ser396 the chain carries Phosphoserine; by AMPK. The residue at position 402 (Ser402) is a Phosphoserine; by SIK1. A disordered region spans residues 421–479 (VEDTLTPPPSDAGSPFQSSPLSLGSRGSGSGGSGSDSEPDSPVFEDSKAKPEQRPSLHS). Residue Ser457 is modified to Phosphoserine. Positions 465–479 (EDSKAKPEQRPSLHS) are enriched in basic and acidic residues. Residues 488–508 (LALCTLVFLCLSCNPLASLLG) form a helical membrane-spanning segment. At 509 to 547 (ARGLPSPSDTTSVYHSPGRNVLGTESRDGPGWAQWLLPP) the chain is on the lumenal side. A helical transmembrane segment spans residues 548 to 568 (VVWLLNGLLVLVSLVLLFVYG). Residues 569–1147 (EPVTRPHSGP…LGGGTTVTSS (579 aa)) lie on the Cytoplasmic side of the membrane. Phosphoserine is present on Ser1060.

It belongs to the SREBP family. Forms a tight complex with SCAP, the SCAP-SREBP complex, in the endoplasmic reticulum membrane and the Golgi apparatus. Interacts with PAQR3; the interaction anchors the SCAP-SREBP complex to the Golgi apparatus in low cholesterol conditions. In terms of assembly, efficient DNA binding of the soluble transcription factor fragment requires dimerization with another bHLH protein. Interacts with CEBPA, the interaction produces a transcriptional synergy. Interacts with LMNA. Post-translationally, processed in the Golgi apparatus, releasing the protein from the membrane. At low cholesterol the SCAP-SREBP complex is recruited into COPII vesicles for export from the endoplasmic reticulum. In the Golgi, complex SREBPs are cleaved sequentially by site-1 (MBTPS1, S1P) and site-2 (MBTPS2, S2P) protease. The first cleavage by site-1 protease occurs within the luminal loop, the second cleavage by site-2 protease occurs within the first transmembrane domain, releasing the transcription factor from the Golgi membrane. Phosphorylated by AMPK, leading to suppress protein processing and nuclear translocation, and repress target gene expression. Phosphorylation at Ser-402 by SIK1 represses activity possibly by inhibiting DNA-binding. In terms of processing, SCAP-free SREBF1 is ubiquitinated by the BCR(ARMC5) complex, leading to its degradation. Post-translationally, ubiquitinated; the nuclear form has a rapid turnover and is rapidly ubiquitinated and degraded by the proteasome in the nucleus. In terms of tissue distribution, expressed in a wide variety of tissues, most abundant in liver and adrenal gland. In fetal tissues lung and liver shows highest expression. As to expression, predominates in hepatoma cell lines. Also expressed in kidney, brain, white fat, and muscle. Predominantly expressed in liver and adipose tissues. Also expressed in kidney, brain, white fat, and muscle.

It localises to the endoplasmic reticulum membrane. The protein resides in the golgi apparatus membrane. The protein localises to the cytoplasmic vesicle. It is found in the COPII-coated vesicle membrane. Its subcellular location is the nucleus. Activation by cleavage is down-regulated upon activation of SIRT3-dependent PRKAA1/AMPK-alpha signaling cascade which leads to inhibition of ATP-consuming lipogenesis to restore cellular energy balance. Functionally, precursor of the transcription factor form (Processed sterol regulatory element-binding protein 1), which is embedded in the endoplasmic reticulum membrane. Low sterol concentrations promote processing of this form, releasing the transcription factor form that translocates into the nucleus and activates transcription of genes involved in cholesterol biosynthesis and lipid homeostasis. Its function is as follows. Key transcription factor that regulates expression of genes involved in cholesterol biosynthesis and lipid homeostasis. Binds to the sterol regulatory element 1 (SRE-1) (5'-ATCACCCCAC-3'). Has dual sequence specificity binding to both an E-box motif (5'-ATCACGTGA-3') and to SRE-1 (5'-ATCACCCCAC-3'). Regulates the promoters of genes involved in cholesterol biosynthesis and the LDL receptor (LDLR) pathway of sterol regulation. Isoform expressed only in select tissues, which has higher transcriptional activity compared to SREBP-1C. Able to stimulate both lipogenic and cholesterogenic gene expression. Has a role in the nutritional regulation of fatty acids and triglycerides in lipogenic organs such as the liver. Required for innate immune response in macrophages by regulating lipid metabolism. In terms of biological role, predominant isoform expressed in most tissues, which has weaker transcriptional activity compared to isoform SREBP-1A. Primarily controls expression of lipogenic gene. Strongly activates global lipid synthesis in rapidly growing cells. Functionally, the absence of Golgi proteolytic processing requirement makes this isoform constitutively active in transactivation of lipogenic gene promoters. In Homo sapiens (Human), this protein is Sterol regulatory element-binding protein 1.